A 323-amino-acid chain; its full sequence is MSVPWFNQFYKEIADSPLSAWLELLPGQISTWQKEQLHGDFNKWVKLLGKLPQTHPSEIELKERVEFGLQSEINEYTQKQIIGLLKQFMPWRKGPFHIHGIHIDTEWRSDWKWERVQPHIQSLENRYVLDVGCGSGYHMWRMLGENAKMVVGADPSQLFLMQFQATKHFNPDPRIHLLPVGVEQLPEKNAFDTVFSMGVLYHRKSPLDFLQQLKNQLRPGGELILETLVVEGDENTVLMAGDRYAQMRNVWFLPSTDALCLWMKRLGFKNVRVVDLAKTTIEEQRATQWMDSQSLVDFLDPNDHSKTIEGYPAPLRAVVVAER.

Residues Lys-93, Trp-107, Lys-112, Gly-132, 154–156 (DPS), 182–183 (VE), Met-197, Tyr-201, and Arg-316 each bind carboxy-S-adenosyl-L-methionine.

The protein belongs to the class I-like SAM-binding methyltransferase superfamily. CmoB family. In terms of assembly, homotetramer.

It catalyses the reaction carboxy-S-adenosyl-L-methionine + 5-hydroxyuridine(34) in tRNA = 5-carboxymethoxyuridine(34) in tRNA + S-adenosyl-L-homocysteine + H(+). Functionally, catalyzes carboxymethyl transfer from carboxy-S-adenosyl-L-methionine (Cx-SAM) to 5-hydroxyuridine (ho5U) to form 5-carboxymethoxyuridine (cmo5U) at position 34 in tRNAs. The polypeptide is tRNA U34 carboxymethyltransferase (Pseudoalteromonas atlantica (strain T6c / ATCC BAA-1087)).